Reading from the N-terminus, the 149-residue chain is UPF0310 protein msl3206 (149 aa).

This sequence belongs to the UPF0310 family.

The chain is UPF0310 protein msl3206 from Mesorhizobium japonicum (strain LMG 29417 / CECT 9101 / MAFF 303099) (Mesorhizobium loti (strain MAFF 303099)).